The following is a 601-amino-acid chain: MEGQSLLMAGLLYLCAAVIAVPLAARLGIGAVLGYLLAGIAIGPWGLGFISDVQEILHFSELGVVFLMFIIGLELKPSKLWELRRSIFGVGAAQVLLSAAVLGGLLWLTDFSWQAAIIGGIGLAMSSTAMALQLMRDKAMNRNESGQLGFSVLLFQDLAVIPALALVPLLAGSDSGHTDWMKLGMKVLAFAGMLVGGRYLLRPIFRFIAASGVREVFTAAALLLVLGSALFMEALGLSMALGTFIAGILLAESEYRHELEIAIDPFKGLLLGLFFISVGMALNLGVLYTHILEILAGVVMLVTVKTAVLYLLARIYGLRSSERLQFSGVLSQGGEFAFVLFSAASSTSLFSGDQMPLLLVTVTLSMMTTPLLMQGVDKILKHRFNEVDDSQEKPFVEDDKPQVIVVGFGRFGQVVARLLMANEKRITVLERDISAVSLMRSYGYKVYYGDATQLELLRAAGAETAQSLVIACNGPEDAMAIVHLCQQHFPHLQILARARGRVEAHELLQAGVTQFSRETFSSALELGRKTLMSLGMHPHQAFRAQQHFRRLDMRMLRALMPNHGDSQQISRVKEARRELEDIFQAELRHEKRQFDGWDEAD.

The next 13 helical transmembrane spans lie at 5 to 25 (SLLM…PLAA), 29 to 49 (IGAV…GLGF), 55 to 75 (EILH…GLEL), 87 to 107 (IFGV…GLLW), 115 to 135 (AAII…LQLM), 152 to 172 (VLLF…LLAG), 180 to 202 (WMKL…YLLR), 207 to 227 (FIAA…LVLG), 230 to 250 (LFME…GILL), 268 to 288 (GLLL…GVLY), 291 to 311 (ILEI…VLYL), 324 to 344 (LQFS…FSAA), and 356 to 376 (PLLL…MQGV). The RCK N-terminal domain occupies 400 to 519 (KPQVIVVGFG…AGVTQFSRET (120 aa)).

Belongs to the monovalent cation:proton antiporter 2 (CPA2) transporter (TC 2.A.37) family. KefB subfamily. Interacts with the regulatory subunit KefG.

It is found in the cell inner membrane. Functionally, pore-forming subunit of a potassium efflux system that confers protection against electrophiles. Catalyzes K(+)/H(+) antiport. This chain is Glutathione-regulated potassium-efflux system protein KefB, found in Erwinia tasmaniensis (strain DSM 17950 / CFBP 7177 / CIP 109463 / NCPPB 4357 / Et1/99).